Consider the following 512-residue polypeptide: rRNA N(6)-adenosine-methyltransferase ZCCHC4 (512 aa).

The Zn(2+) site is built by cysteine 39, histidine 41, cysteine 63, cysteine 72, cysteine 124, cysteine 127, histidine 139, and histidine 142. A GRF-type zinc finger spans residues cysteine 39–lysine 81. S-adenosyl-L-methionine is bound by residues glutamine 171 to phenylalanine 174, arginine 201, aspartate 223, asparagine 241 to methionine 242, and aspartate 274. The interval glutamine 335 to proline 355 is regulatory loop. The Zn(2+) site is built by cysteine 378, cysteine 381, histidine 391, cysteine 392, cysteine 395, cysteine 398, histidine 408, cysteine 409, cysteine 412, cysteine 415, histidine 422, cysteine 423, cysteine 426, cysteine 429, histidine 434, and cysteine 436. One can recognise a DHHC domain in the interval valine 393–isoleucine 445. The CCHC-type zinc finger occupies aspartate 441–asparagine 458.

This sequence belongs to the ZCCHC4 family. As to quaternary structure, interacts with components of the ASC-1 complex TRIP4, ASCC1, ASCC2 and ASCC3. Interact with AHCYL1 and AHCYL2. Interact with YTHDC2.

Its subcellular location is the cytoplasm. The protein localises to the nucleus. The protein resides in the nucleolus. The enzyme catalyses adenosine(4220) in 28S rRNA + S-adenosyl-L-methionine = N(6)-methyladenosine(4220) in 28S rRNA + S-adenosyl-L-homocysteine + H(+). In terms of biological role, rRNA N6-methyltransferase that specifically methylates the adenine in position 4220 of 28S rRNA. N6-methylation of adenine(4220) in 28S rRNA is required for translation. This is rRNA N(6)-adenosine-methyltransferase ZCCHC4 from Mus musculus (Mouse).